The sequence spans 513 residues: Xylose import ATP-binding protein XylG (513 aa).

2 ABC transporter domains span residues 5 to 242 (LEMK…VGRE) and 259 to 505 (LRIE…LRSE). 37–44 (GENGSGKS) provides a ligand contact to ATP.

The protein belongs to the ABC transporter superfamily. Xylose importer (TC 3.A.1.2.4) family. As to quaternary structure, the complex is composed of two ATP-binding proteins (XylG), two transmembrane proteins (XylH) and a solute-binding protein (XylF).

It is found in the cell inner membrane. It catalyses the reaction D-xylose(out) + ATP + H2O = D-xylose(in) + ADP + phosphate + H(+). Part of the ABC transporter complex XylFGH involved in xylose import. Responsible for energy coupling to the transport system. This chain is Xylose import ATP-binding protein XylG, found in Shigella flexneri serotype 5b (strain 8401).